A 182-amino-acid polypeptide reads, in one-letter code: Adenine phosphoribosyltransferase (182 aa).

It belongs to the purine/pyrimidine phosphoribosyltransferase family. As to quaternary structure, homodimer.

It is found in the cytoplasm. The catalysed reaction is AMP + diphosphate = 5-phospho-alpha-D-ribose 1-diphosphate + adenine. The protein operates within purine metabolism; AMP biosynthesis via salvage pathway; AMP from adenine: step 1/1. Functionally, catalyzes a salvage reaction resulting in the formation of AMP, that is energically less costly than de novo synthesis. In Pseudomonas aeruginosa (strain LESB58), this protein is Adenine phosphoribosyltransferase.